A 514-amino-acid polypeptide reads, in one-letter code: 2,3-bisphosphoglycerate-independent phosphoglycerate mutase (514 aa).

The Mn(2+) site is built by Asp-14 and Ser-64. Ser-64 acts as the Phosphoserine intermediate in catalysis. Substrate is bound by residues His-125, 155-156, Arg-187, Arg-193, 263-266, and Lys-336; these read RD and RADR. Asp-403, His-407, Asp-444, His-445, and His-463 together coordinate Mn(2+).

The protein belongs to the BPG-independent phosphoglycerate mutase family. As to quaternary structure, monomer. Requires Mn(2+) as cofactor.

It catalyses the reaction (2R)-2-phosphoglycerate = (2R)-3-phosphoglycerate. It functions in the pathway carbohydrate degradation; glycolysis; pyruvate from D-glyceraldehyde 3-phosphate: step 3/5. Catalyzes the interconversion of 2-phosphoglycerate and 3-phosphoglycerate. This chain is 2,3-bisphosphoglycerate-independent phosphoglycerate mutase, found in Shigella flexneri.